We begin with the raw amino-acid sequence, 92 residues long: MTRSLKKVPFVAHHLWKKIESLNIKKEKRVIITWSRASTIVPGMIGHTIAVYNGREHLPIYVTDRMVGHKLGEFVLTRTFRGHARKDKKSRR.

Belongs to the universal ribosomal protein uS19 family.

The protein localises to the plastid. It localises to the chloroplast. In terms of biological role, protein S19 forms a complex with S13 that binds strongly to the 16S ribosomal RNA. This is Small ribosomal subunit protein uS19c from Psilotum nudum (Whisk fern).